We begin with the raw amino-acid sequence, 1454 residues long: ABC transporter G family member 39 (1454 aa).

The ABC transporter 1 domain occupies 175–448 (LGFFHLLPSK…FEYFGFQCPE (274 aa)). 208–215 (GPPSSGKT) is a binding site for ATP. An ABC transmembrane type-2 1 domain is found at 526–739 (ELFKACFDRE…GQTAIVMNEF (214 aa)). A run of 7 helical transmembrane segments spans residues 544–564 (FVYV…MTVY), 584–604 (MFFS…FTVM), 623–643 (FALP…GIWI), 663–683 (LLAY…LGAI), 689–709 (ISNS…GFII), 716–736 (PWMT…AIVM), and 775–795 (FWIC…FYIL). A compositionally biased stretch (basic and acidic residues) spans 812 to 824 (EEGKDKQKGENRG). Residues 812–838 (EEGKDKQKGENRGTEGSVVELNSSSNK) are disordered. Positions 853–1106 (LAFNNVNYYV…LVEYFEAVEG (254 aa)) constitute an ABC transporter 2 domain. Residue 898-905 (GVSGAGKT) participates in ATP binding. Residues 1178–1392 (TQTKACFWKQ…TLYGLITSQV (215 aa)) enclose the ABC transmembrane type-2 2 domain. 7 consecutive transmembrane segments (helical) span residues 1199–1219 (AIRF…FWQI), 1231–1251 (NFFG…AATV), 1285–1303 (IMYN…YSMI), 1312–1332 (FLWF…YGMM), 1342–1362 (IAGI…GFLI), 1367–1387 (IPIW…LYGL), and 1423–1443 (FLPV…FVFA).

It belongs to the ABC transporter superfamily. ABCG family. PDR (TC 3.A.1.205) subfamily.

It localises to the membrane. In terms of biological role, may be a general defense protein. In Arabidopsis thaliana (Mouse-ear cress), this protein is ABC transporter G family member 39 (ABCG39).